The chain runs to 146 residues: Prefoldin subunit alpha (146 aa).

The protein belongs to the prefoldin alpha subunit family. As to quaternary structure, heterohexamer of two alpha and four beta subunits.

The protein resides in the cytoplasm. In terms of biological role, molecular chaperone capable of stabilizing a range of proteins. Seems to fulfill an ATP-independent, HSP70-like function in archaeal de novo protein folding. This Methanobrevibacter smithii (strain ATCC 35061 / DSM 861 / OCM 144 / PS) protein is Prefoldin subunit alpha.